A 172-amino-acid polypeptide reads, in one-letter code: MKIYKDIITGDEMFADTYKMKLVDDVIYEVYGKLITRQGDDIKLEGANASAEEADEGTDITSESGVDVVLNHRLTECFAFGDKKSYTLYLKDYMKKVLAKLEEKSPDQVDIFKTNMNKAMKDILGRFKELQFFTGESMDCDGMVALVEYREINGDSVPVLMFFKHGLEEEKC.

In terms of domain architecture, TCTP spans 1–172 (MKIYKDIITG…FKHGLEEEKC (172 aa)). A Phosphoserine modification is found at S50. A phosphothreonine mark is found at T58 and T61.

This sequence belongs to the TCTP family.

Its subcellular location is the cytoplasm. In terms of biological role, involved in calcium binding and microtubule stabilization. This is Translationally-controlled tumor protein homolog (Tctp) from Drosophila melanogaster (Fruit fly).